A 495-amino-acid polypeptide reads, in one-letter code: UDP-N-acetylmuramoyl-L-alanyl-D-glutamate--2,6-diaminopimelate ligase (495 aa).

UDP-N-acetyl-alpha-D-muramoyl-L-alanyl-D-glutamate-binding positions include Leu27, Ser29, and 44-46; that span reads HQA. 116–122 provides a ligand contact to ATP; it reads GTNGKTT. UDP-N-acetyl-alpha-D-muramoyl-L-alanyl-D-glutamate-binding positions include Asn157, 158–159, Ser185, Gln191, and Arg193; that span reads TT. Lys225 is modified (N6-carboxylysine). Meso-2,6-diaminopimelate is bound by residues Arg390, 414 to 417, Gly465, and Glu469; that span reads DNPR. Positions 414–417 match the Meso-diaminopimelate recognition motif motif; that stretch reads DNPR.

The protein belongs to the MurCDEF family. MurE subfamily. It depends on Mg(2+) as a cofactor. Post-translationally, carboxylation is probably crucial for Mg(2+) binding and, consequently, for the gamma-phosphate positioning of ATP.

The protein resides in the cytoplasm. The catalysed reaction is UDP-N-acetyl-alpha-D-muramoyl-L-alanyl-D-glutamate + meso-2,6-diaminopimelate + ATP = UDP-N-acetyl-alpha-D-muramoyl-L-alanyl-gamma-D-glutamyl-meso-2,6-diaminopimelate + ADP + phosphate + H(+). The protein operates within cell wall biogenesis; peptidoglycan biosynthesis. Catalyzes the addition of meso-diaminopimelic acid to the nucleotide precursor UDP-N-acetylmuramoyl-L-alanyl-D-glutamate (UMAG) in the biosynthesis of bacterial cell-wall peptidoglycan. In Enterobacter sp. (strain 638), this protein is UDP-N-acetylmuramoyl-L-alanyl-D-glutamate--2,6-diaminopimelate ligase.